A 39-amino-acid polypeptide reads, in one-letter code: Photosystem II reaction center protein J (39 aa).

Residues 9 to 29 form a helical membrane-spanning segment; that stretch reads LWLVATVGGMAAITVLGIFIY.

This sequence belongs to the PsbJ family. As to quaternary structure, PSII is composed of 1 copy each of membrane proteins PsbA, PsbB, PsbC, PsbD, PsbE, PsbF, PsbH, PsbI, PsbJ, PsbK, PsbL, PsbM, PsbT, PsbX, PsbY, PsbZ, Psb30/Ycf12, at least 3 peripheral proteins of the oxygen-evolving complex and a large number of cofactors. It forms dimeric complexes.

It is found in the plastid. It localises to the chloroplast thylakoid membrane. One of the components of the core complex of photosystem II (PSII). PSII is a light-driven water:plastoquinone oxidoreductase that uses light energy to abstract electrons from H(2)O, generating O(2) and a proton gradient subsequently used for ATP formation. It consists of a core antenna complex that captures photons, and an electron transfer chain that converts photonic excitation into a charge separation. This chain is Photosystem II reaction center protein J, found in Porphyra purpurea (Red seaweed).